We begin with the raw amino-acid sequence, 129 residues long: Methylmalonyl-CoA decarboxylase subunit gamma (129 aa).

2 stretches are compositionally biased toward low complexity: residues 24–39 (APAA…APAP) and 49–58 (PAAAAAPVPA). A disordered region spans residues 24-58 (APAAAPKAAPAAAPAPKAAPAPAPAPAAAAAPVPA). The region spanning 51 to 129 (AAAAPVPAGA…STGDDMVVLG (79 aa)) is the Biotinyl-binding domain. Lys95 is subject to N6-biotinyllysine.

In terms of assembly, the methylmalonyl-CoA decarboxylase is composed of five subunits: the carboxyltransferase alpha subunit (MmdA), the tunnel beta subunit (MmdB), the biotin-containing gamma subunit (MmdC), and the delta (MmdD) and epsilon (MmdE) subunits. It depends on biotin as a cofactor.

It localises to the cell membrane. It catalyses the reaction (S)-methylmalonyl-CoA + Na(+)(in) + H(+)(out) = propanoyl-CoA + Na(+)(out) + CO2. Its activity is regulated as follows. Completely inhibited by avidin. Biotin-containing subunit of the sodium ion pump methylmalonyl-CoA decarboxylase, which converts the chemical energy of a decarboxylation reaction into an electrochemical gradient of Na(+) ions across the cytoplasmic membrane, thereby creating a sodium ion motive force that is used for ATP synthesis. Can also convert malonyl-CoA into acetyl-CoA. The polypeptide is Methylmalonyl-CoA decarboxylase subunit gamma (Veillonella parvula (Staphylococcus parvulus)).